Here is a 367-residue protein sequence, read N- to C-terminus: DNA replication and repair protein RecF (367 aa).

Residue 31-38 (GENGSGKT) coordinates ATP.

The protein belongs to the RecF family.

It is found in the cytoplasm. The RecF protein is involved in DNA metabolism; it is required for DNA replication and normal SOS inducibility. RecF binds preferentially to single-stranded, linear DNA. It also seems to bind ATP. The chain is DNA replication and repair protein RecF from Saccharophagus degradans (strain 2-40 / ATCC 43961 / DSM 17024).